Reading from the N-terminus, the 311-residue chain is tRNA dimethylallyltransferase (311 aa).

12–19 (GPTASGKT) serves as a coordination point for ATP. Substrate is bound at residue 14–19 (TASGKT). Interaction with substrate tRNA stretches follow at residues 37–40 (DSAM) and 161–165 (QRIQR).

The protein belongs to the IPP transferase family. Monomer. Mg(2+) is required as a cofactor.

It catalyses the reaction adenosine(37) in tRNA + dimethylallyl diphosphate = N(6)-dimethylallyladenosine(37) in tRNA + diphosphate. Functionally, catalyzes the transfer of a dimethylallyl group onto the adenine at position 37 in tRNAs that read codons beginning with uridine, leading to the formation of N6-(dimethylallyl)adenosine (i(6)A). This chain is tRNA dimethylallyltransferase, found in Coxiella burnetii (strain RSA 331 / Henzerling II).